A 321-amino-acid polypeptide reads, in one-letter code: Lipoyl synthase (321 aa).

Residues cysteine 68, cysteine 73, cysteine 79, cysteine 94, cysteine 98, cysteine 101, and serine 308 each coordinate [4Fe-4S] cluster. In terms of domain architecture, Radical SAM core spans 80-297 (FNHGTATFMI…KAEAMAMGFT (218 aa)).

This sequence belongs to the radical SAM superfamily. Lipoyl synthase family. Requires [4Fe-4S] cluster as cofactor.

Its subcellular location is the cytoplasm. It carries out the reaction [[Fe-S] cluster scaffold protein carrying a second [4Fe-4S](2+) cluster] + N(6)-octanoyl-L-lysyl-[protein] + 2 oxidized [2Fe-2S]-[ferredoxin] + 2 S-adenosyl-L-methionine + 4 H(+) = [[Fe-S] cluster scaffold protein] + N(6)-[(R)-dihydrolipoyl]-L-lysyl-[protein] + 4 Fe(3+) + 2 hydrogen sulfide + 2 5'-deoxyadenosine + 2 L-methionine + 2 reduced [2Fe-2S]-[ferredoxin]. It functions in the pathway protein modification; protein lipoylation via endogenous pathway; protein N(6)-(lipoyl)lysine from octanoyl-[acyl-carrier-protein]: step 2/2. Catalyzes the radical-mediated insertion of two sulfur atoms into the C-6 and C-8 positions of the octanoyl moiety bound to the lipoyl domains of lipoate-dependent enzymes, thereby converting the octanoylated domains into lipoylated derivatives. The sequence is that of Lipoyl synthase from Pectobacterium atrosepticum (strain SCRI 1043 / ATCC BAA-672) (Erwinia carotovora subsp. atroseptica).